A 97-amino-acid chain; its full sequence is Large ribosomal subunit protein bL36m (97 aa).

This sequence belongs to the bacterial ribosomal protein bL36 family. Component of the mitochondrial ribosome large subunit (39S) which comprises a 16S rRNA and about 50 distinct proteins.

The protein resides in the mitochondrion. The sequence is that of Large ribosomal subunit protein bL36m (Mrpl36) from Rattus norvegicus (Rat).